Reading from the N-terminus, the 305-residue chain is Ribonuclease Z (305 aa).

His61, His63, Asp65, His66, His141, Asp209, and His268 together coordinate Zn(2+). The active-site Proton acceptor is Asp65.

It belongs to the RNase Z family. In terms of assembly, homodimer. The cofactor is Zn(2+).

It catalyses the reaction Endonucleolytic cleavage of RNA, removing extra 3' nucleotides from tRNA precursor, generating 3' termini of tRNAs. A 3'-hydroxy group is left at the tRNA terminus and a 5'-phosphoryl group is left at the trailer molecule.. Functionally, zinc phosphodiesterase, which displays some tRNA 3'-processing endonuclease activity. Probably involved in tRNA maturation, by removing a 3'-trailer from precursor tRNA. The chain is Ribonuclease Z from Clostridioides difficile (strain 630) (Peptoclostridium difficile).